We begin with the raw amino-acid sequence, 238 residues long: 3,4-dihydroxy-2-butanone 4-phosphate synthase (238 aa).

Residues 26–27 (RE), Asp31, 166–170 (RVGQT), and Glu190 contribute to the D-ribulose 5-phosphate site. Glu27 is a binding site for Mg(2+).

This sequence belongs to the DHBP synthase family. In terms of assembly, homodimer. It depends on Mg(2+) as a cofactor. Mn(2+) serves as cofactor.

It catalyses the reaction D-ribulose 5-phosphate = (2S)-2-hydroxy-3-oxobutyl phosphate + formate + H(+). It functions in the pathway cofactor biosynthesis; riboflavin biosynthesis; 2-hydroxy-3-oxobutyl phosphate from D-ribulose 5-phosphate: step 1/1. Its function is as follows. Catalyzes the conversion of D-ribulose 5-phosphate to formate and 3,4-dihydroxy-2-butanone 4-phosphate. This is 3,4-dihydroxy-2-butanone 4-phosphate synthase from Archaeoglobus fulgidus (strain ATCC 49558 / DSM 4304 / JCM 9628 / NBRC 100126 / VC-16).